A 204-amino-acid polypeptide reads, in one-letter code: Peptide deformylase (204 aa).

Fe cation contacts are provided by Cys-131 and His-174. Residue Glu-175 is part of the active site. A Fe cation-binding site is contributed by His-178.

This sequence belongs to the polypeptide deformylase family. Fe(2+) serves as cofactor.

It catalyses the reaction N-terminal N-formyl-L-methionyl-[peptide] + H2O = N-terminal L-methionyl-[peptide] + formate. Functionally, removes the formyl group from the N-terminal Met of newly synthesized proteins. Requires at least a dipeptide for an efficient rate of reaction. N-terminal L-methionine is a prerequisite for activity but the enzyme has broad specificity at other positions. In Streptococcus equi subsp. zooepidemicus (strain H70), this protein is Peptide deformylase.